The primary structure comprises 467 residues: Asparagine--tRNA ligase (467 aa).

The protein belongs to the class-II aminoacyl-tRNA synthetase family. In terms of assembly, homodimer.

It is found in the cytoplasm. The catalysed reaction is tRNA(Asn) + L-asparagine + ATP = L-asparaginyl-tRNA(Asn) + AMP + diphosphate + H(+). The protein is Asparagine--tRNA ligase of Bacteroides fragilis (strain ATCC 25285 / DSM 2151 / CCUG 4856 / JCM 11019 / LMG 10263 / NCTC 9343 / Onslow / VPI 2553 / EN-2).